The chain runs to 480 residues: UDP-N-acetylmuramate--L-alanine ligase (480 aa).

122-128 is an ATP binding site; the sequence is GTHGKTT.

Belongs to the MurCDEF family.

The protein localises to the cytoplasm. It carries out the reaction UDP-N-acetyl-alpha-D-muramate + L-alanine + ATP = UDP-N-acetyl-alpha-D-muramoyl-L-alanine + ADP + phosphate + H(+). Its pathway is cell wall biogenesis; peptidoglycan biosynthesis. Cell wall formation. This chain is UDP-N-acetylmuramate--L-alanine ligase, found in Pseudomonas aeruginosa (strain LESB58).